The sequence spans 193 residues: Large ribosomal subunit protein bL9 (193 aa).

The segment at 155–193 is disordered; that stretch reads AEGETLTSAEAIYDIQEKPLAENQEEMNDNDANSINEQA. Residues 184–193 show a composition bias toward polar residues; the sequence is NDANSINEQA.

This sequence belongs to the bacterial ribosomal protein bL9 family.

Its function is as follows. Binds to the 23S rRNA. The chain is Large ribosomal subunit protein bL9 from Bartonella quintana (strain Toulouse) (Rochalimaea quintana).